Consider the following 294-residue polypeptide: Phosphoribosylaminoimidazole-succinocarboxamide synthase (294 aa).

Belongs to the SAICAR synthetase family.

It carries out the reaction 5-amino-1-(5-phospho-D-ribosyl)imidazole-4-carboxylate + L-aspartate + ATP = (2S)-2-[5-amino-1-(5-phospho-beta-D-ribosyl)imidazole-4-carboxamido]succinate + ADP + phosphate + 2 H(+). It participates in purine metabolism; IMP biosynthesis via de novo pathway; 5-amino-1-(5-phospho-D-ribosyl)imidazole-4-carboxamide from 5-amino-1-(5-phospho-D-ribosyl)imidazole-4-carboxylate: step 1/2. This is Phosphoribosylaminoimidazole-succinocarboxamide synthase from Thermoplasma volcanium (strain ATCC 51530 / DSM 4299 / JCM 9571 / NBRC 15438 / GSS1).